A 65-amino-acid polypeptide reads, in one-letter code: Gallinacin-12 (65 aa).

Residues 1–19 (MRNLCFVFIFISLLAHGST) form the signal peptide. Cystine bridges form between Cys25–Cys54, Cys32–Cys47, and Cys37–Cys55.

This sequence belongs to the beta-defensin family. Expressed in the large intestine, kidney liver, gall bladder, testis, ovary and male and female reproductive tracts. Expressed in the ovarian stroma and the theca and granulosa layers of the ovarian follicle.

Its subcellular location is the secreted. The protein resides in the cytoplasmic granule. Its function is as follows. Has bactericidal activity. The protein is Gallinacin-12 (GAL12) of Gallus gallus (Chicken).